A 338-amino-acid chain; its full sequence is UPF0104 membrane protein MTH_1261 (338 aa).

A run of 8 helical transmembrane segments spans residues 6–26, 36–56, 124–144, 149–169, 231–251, 254–274, 275–295, and 310–330; these read AILI…IGPG, DPVY…LFTL, LDTF…VLYF, WILA…FLAL, ISFL…TAFG, ISLL…MIPL, LPGG…YAGV, and ISFW…GSSV.

It belongs to the UPF0104 family.

The protein resides in the cell membrane. This Methanothermobacter thermautotrophicus (strain ATCC 29096 / DSM 1053 / JCM 10044 / NBRC 100330 / Delta H) (Methanobacterium thermoautotrophicum) protein is UPF0104 membrane protein MTH_1261.